Reading from the N-terminus, the 515-residue chain is MEELQGYLEEDRSRQQQFLYPLLFQEYIYVFAYDHGLNSSIFYEPQNSLGYDNKFSSVLVKRLIIRMYQKNYLIYSVNDIYQNIFVGHNNYFYFNFFSQILSEGFAVIVEIPFSLQLISSLEEKEIPKSHNLQSSHSIFPFLEDKLLHLNYLSDILIPYPVHMEILVQMLQSWIQDVLSLHLLQFFLHEYYNWNSLIIPKKSIYVFSKENKRLFWFLYNLYIYEYEFLLVFPCKQSSFLRLISSGVLLERIHFYVKIEHLGVCRIFCQKTLWIFKDPFIHYIRYQGKSILGSRGTHFLMKKWKYHLVNFWQYYFHFWSQPYRIDIKKLSNYSFYFLGYFSSVQINSSMVRNQMLENSFLMYTLTKKFDTIIPIIPLIRSLSKAQFCTVSGYPISKPIWTDLADCDIINRFGRICRKLSHYYSGSSKKQSLYRMKYILRLSCARTLARKHKSSARSFLQRLSSGLLEEFFTEEEQVIFLIFPKIISFYLYGSYRERIWYLDIIRINDLVNCLLVTT.

This sequence belongs to the intron maturase 2 family. MatK subfamily.

The protein localises to the plastid. The protein resides in the chloroplast. In terms of biological role, usually encoded in the trnK tRNA gene intron. Probably assists in splicing its own and other chloroplast group II introns. This is Maturase K from Zingiber mioga (Myoga ginger).